The primary structure comprises 798 residues: Probable G-protein coupled receptor 156 (798 aa).

The Extracellular portion of the chain corresponds to 1–49; the sequence is MEPEINCSEFCDSFPGQELDRRPLHDLCKTTITESQHSSTAASPLSPAL. N-linked (GlcNAc...) asparagine glycosylation is present at Asn6. Residues 50-70 form a helical membrane-spanning segment; it reads LGIMWTFLSCGLLLVLFFLAF. The Cytoplasmic portion of the chain corresponds to 71–86; that stretch reads TIRCRKNRIVKMSSPN. Residues 87 to 107 traverse the membrane as a helical segment; the sequence is LNVVTLLGSCLTYISAYLFGI. Residues 108–118 lie on the Extracellular side of the membrane; it reads QDALEGSSVEA. A helical membrane pass occupies residues 119–139; it reads LIQTRLSLLCIGTSLVFGPIL. Residues 140–164 are Cytoplasmic-facing; sequence GKSWRLYKVFTQRVPDKRVIIKDLQ. The helical transmembrane segment at 165–185 threads the bilayer; sequence LLGLVAALVVADVILLVTWVL. Topologically, residues 186-222 are extracellular; that stretch reads TDPIQCLQMLGVSMKVTGRDVSCSLTNTHFCASRYSD. The chain crosses the membrane as a helical span at residues 223–243; the sequence is VWIALVLGCKGLLLLYGAYLA. The Cytoplasmic segment spans residues 244-257; the sequence is GLTNHVSSPPVNQS. A helical transmembrane segment spans residues 258 to 278; it reads LTIMVGVNLLLLTAGLLFVVT. The Extracellular portion of the chain corresponds to 279–288; that stretch reads RYLHSWPNLV. A helical transmembrane segment spans residues 289–309; it reads FGLTSGGIFVCTTTVNCCVFI. Residues 310 to 798 lie on the Cytoplasmic side of the membrane; the sequence is PQLKQWKAFE…FKDDLKPTLV (489 aa). Residues 353–390 adopt a coiled-coil conformation; it reads DEKSCMERLLTEKNAVIESLQEQVSNAKEKLVKLMSAE. 3 disordered regions span residues 441 to 497, 546 to 666, and 693 to 715; these read HVQG…PMAP, SEAP…KQCE, and PAAPCLPSSPALPRQRQPRPRLS. Over residues 479–492 the composition is skewed to basic and acidic residues; it reads PKAEQSEGPERGDQ. The segment covering 559–572 has biased composition (polar residues); it reads LWKSTTSRSPQKLS. The span at 583–594 shows a compositional bias: basic residues; sequence VRRRRAAQRARS. The segment covering 606–624 has biased composition (polar residues); the sequence is HQANSTVSSSQSGLIVQNR. Positions 639 to 648 are enriched in low complexity; that stretch reads PRSSSVKPSP.

The protein belongs to the G-protein coupled receptor 3 family. GABA-B receptor subfamily. In terms of tissue distribution, expressed in the outer and inner hair cells of the organ of Corti (at protein level). Expressed in the utricle and saccule within the vestibule (at protein level).

The protein resides in the cell membrane. It is found in the postsynaptic cell membrane. In terms of biological role, orphan G-protein coupled receptor involved in the regulation of hair cell orientation in mechanosensory organs of the inner ear. It is required to trigger a 180 degree reversal in hair cell orientation, creating a virtual line of polarity reversal (LPR) across which stereociliary bundles are arranged in opposite orientations. In Mus musculus (Mouse), this protein is Probable G-protein coupled receptor 156 (Gpr156).